The following is a 442-amino-acid chain: Probable folate-biopterin transporter 7 (442 aa).

12 helical membrane-spanning segments follow: residues L23–F43, L64–F82, I87–L107, I114–A134, F158–I178, Q184–I204, I241–Y261, A270–A290, K302–V322, V335–F355, I379–V399, and G410–D430.

This sequence belongs to the major facilitator superfamily. Folate-biopterin transporter (TC 2.A.71) family.

It is found in the membrane. Could mediate folate transport. In Arabidopsis thaliana (Mouse-ear cress), this protein is Probable folate-biopterin transporter 7.